A 740-amino-acid polypeptide reads, in one-letter code: Elongation factor 2 (740 aa).

Residues 23–264 (AQIRNAGTLA…MIIEHVPPPN (242 aa)) form the tr-type G domain. GTP is bound by residues 32–39 (AHVDHGKT), 98–102 (DTPGH), and 152–155 (NKID). The residue at position 605 (histidine 605) is a Diphthamide.

It belongs to the TRAFAC class translation factor GTPase superfamily. Classic translation factor GTPase family. EF-G/EF-2 subfamily.

Its subcellular location is the cytoplasm. In terms of biological role, catalyzes the GTP-dependent ribosomal translocation step during translation elongation. During this step, the ribosome changes from the pre-translocational (PRE) to the post-translocational (POST) state as the newly formed A-site-bound peptidyl-tRNA and P-site-bound deacylated tRNA move to the P and E sites, respectively. Catalyzes the coordinated movement of the two tRNA molecules, the mRNA and conformational changes in the ribosome. The polypeptide is Elongation factor 2 (Pyrobaculum calidifontis (strain DSM 21063 / JCM 11548 / VA1)).